Consider the following 218-residue polypeptide: Ras-related protein Rab-11B (218 aa).

Position 2 is an N-acetylglycine (G2). Residues S20, G21, G23, K24, S25, N26, N37, L38, S40, S42, and T43 each contribute to the GTP site. A Mg(2+)-binding site is contributed by S25. The Switch 1 motif lies at 36-47; sequence FNLESKSTIGVE. The Mg(2+) site is built by T43 and D66. Residues 67-86 carry the Switch 2 motif; sequence TAGQERYRAITSAYYRGAVG. G69, N124, K125, D127, A155, and L156 together coordinate GTP. The interval 183–218 is disordered; that stretch reads DRSAHDESPGNNVVDISVPPTTDGQKSNKLQCCQNM. Over residues 201–218 the composition is skewed to polar residues; that stretch reads PPTTDGQKSNKLQCCQNM. 2 S-geranylgeranyl cysteine lipidation sites follow: C214 and C215. C215 is modified (cysteine methyl ester). A propeptide spans 216–218 (removed in mature form); that stretch reads QNM.

The protein belongs to the small GTPase superfamily. Rab family. The cofactor is Mg(2+).

It localises to the recycling endosome membrane. Its subcellular location is the cytoplasmic vesicle. It is found in the secretory vesicle. The protein resides in the synaptic vesicle membrane. The protein localises to the phagosome membrane. It carries out the reaction GTP + H2O = GDP + phosphate + H(+). With respect to regulation, regulated by guanine nucleotide exchange factors (GEFs) which promote the exchange of bound GDP for free GTP. Regulated by GTPase activating proteins (GAPs) which increase the GTP hydrolysis activity. Inhibited by GDP dissociation inhibitors (GDIs) which prevent Rab-GDP dissociation. Functionally, the small GTPases Rab are key regulators of intracellular membrane trafficking, from the formation of transport vesicles to their fusion with membranes. Rabs cycle between an inactive GDP-bound form and an active GTP-bound form that is able to recruit to membranes different set of downstream effectors directly responsible for vesicle formation, movement, tethering and fusion. That Rab plays a role in endocytic recycling, regulating apical recycling of several transmembrane proteins including cystic fibrosis transmembrane conductance regulator/CFTR, epithelial sodium channel/ENaC, potassium voltage-gated channel, and voltage-dependent L-type calcium channel. May also regulate constitutive and regulated secretion, like insulin granule exocytosis. Required for melanosome transport and release from melanocytes. Also regulates V-ATPase intracellular transport in response to extracellular acidosis. The polypeptide is Ras-related protein Rab-11B (Diplobatis ommata (Ocellated electric ray)).